A 304-amino-acid chain; its full sequence is Large ribosomal subunit protein uL2m (304 aa).

The transit peptide at 1–60 (MALCALASALRSLSLASPAITARVPTLLPVGQSNVLLQLPSALALPAHRPVHMSADRSAK) directs the protein to the mitochondrion.

It belongs to the universal ribosomal protein uL2 family. Component of the mitochondrial ribosome large subunit (39S) which comprises a 16S rRNA and about 50 distinct proteins.

The protein resides in the mitochondrion. This Rattus norvegicus (Rat) protein is Large ribosomal subunit protein uL2m (Mrpl2).